A 141-amino-acid chain; its full sequence is Large ribosomal subunit protein uL11 (141 aa).

The protein belongs to the universal ribosomal protein uL11 family. In terms of assembly, part of the ribosomal stalk of the 50S ribosomal subunit. Interacts with L10 and the large rRNA to form the base of the stalk. L10 forms an elongated spine to which L12 dimers bind in a sequential fashion forming a multimeric L10(L12)X complex. In terms of processing, one or more lysine residues are methylated.

In terms of biological role, forms part of the ribosomal stalk which helps the ribosome interact with GTP-bound translation factors. The protein is Large ribosomal subunit protein uL11 of Desulfotalea psychrophila (strain LSv54 / DSM 12343).